A 400-amino-acid chain; its full sequence is Tryptophan synthase beta chain (400 aa).

At Lys-91 the chain carries N6-(pyridoxal phosphate)lysine.

Belongs to the TrpB family. As to quaternary structure, tetramer of two alpha and two beta chains. Pyridoxal 5'-phosphate is required as a cofactor.

It catalyses the reaction (1S,2R)-1-C-(indol-3-yl)glycerol 3-phosphate + L-serine = D-glyceraldehyde 3-phosphate + L-tryptophan + H2O. The protein operates within amino-acid biosynthesis; L-tryptophan biosynthesis; L-tryptophan from chorismate: step 5/5. In terms of biological role, the beta subunit is responsible for the synthesis of L-tryptophan from indole and L-serine. The sequence is that of Tryptophan synthase beta chain from Listeria monocytogenes serovar 1/2a (strain ATCC BAA-679 / EGD-e).